Here is a 213-residue protein sequence, read N- to C-terminus: Histone H1.2 (213 aa).

Residues 1–17 are compositionally biased toward low complexity; the sequence is MSETAPAAPAAAPPAEK. The interval 1 to 41 is disordered; sequence MSETAPAAPAAAPPAEKAPVKKKAAKKAGGTPRKASGPPVS. S2 is subject to N-acetylserine; partial. S2 carries the post-translational modification Phosphoserine. The residue at position 17 (K17) is an N6-acetyllysine. K23, K26, and K27 each carry N6-(2-hydroxyisobutyryl)lysine. K34 is subject to N6-(beta-hydroxybutyryl)lysine; alternate. N6-crotonyllysine; alternate is present on K34. K34 bears the N6-methyllysine; alternate mark. The 74-residue stretch at 36–109 folds into the H15 domain; that stretch reads SGPPVSELIT…GASGSFKLNK (74 aa). Residue K46 is modified to N6-(2-hydroxyisobutyryl)lysine. K52 carries the N6-(beta-hydroxybutyryl)lysine; alternate modification. K52 bears the N6-(2-hydroxyisobutyryl)lysine; alternate mark. Citrulline is present on R54. Residue K63 is modified to N6-(2-hydroxyisobutyryl)lysine. N6-(beta-hydroxybutyryl)lysine; alternate is present on K64. K64 is modified (N6-crotonyllysine; alternate). K64 bears the N6-(2-hydroxyisobutyryl)lysine; alternate mark. K75 and K81 each carry N6-(2-hydroxyisobutyryl)lysine. K85 and K90 each carry N6-(beta-hydroxybutyryl)lysine; alternate. 3 positions are modified to N6-crotonyllysine; alternate: K85, K90, and K97. N6-(2-hydroxyisobutyryl)lysine; alternate is present on residues K85, K90, and K97. Residues 92–213 form a disordered region; the sequence is TLVQTKGTGA…KPKKAAPKKK (122 aa). The residue at position 97 (K97) is an N6-succinyllysine; alternate. A Phosphoserine; by PKC modification is found at S104. K106 bears the N6-(beta-hydroxybutyryl)lysine mark. 5 positions are modified to N6-(2-hydroxyisobutyryl)lysine: K110, K117, K121, K129, and K136. Basic residues predominate over residues 119-140; the sequence is KVKKAGGTKPKKPVGAAKKPKK. Position 146 is a phosphothreonine (T146). K148 is subject to N6-(2-hydroxyisobutyryl)lysine. The span at 149–160 shows a compositional bias: basic residues; sequence KSAKKTPKKAKK. Residues K159 and K168 each carry the N6-crotonyllysine; alternate modification. 2 positions are modified to N6-(2-hydroxyisobutyryl)lysine; alternate: K159 and K168. Over residues 169–186 the composition is skewed to basic residues; sequence KVAKSPKKAKVAKPKKAA. At K187 the chain carries N6-methyllysine; by EHMT1 and EHMT2. An ADP-ribosylserine modification is found at S188. A compositionally biased stretch (basic residues) spans 193 to 213; sequence VKPKAAKPKVVKPKKAAPKKK. K213 is subject to N6-(2-hydroxyisobutyryl)lysine.

Belongs to the histone H1/H5 family. Interacts with TSC22D1 isoforms 2 and 5. H1 histones are progressively phosphorylated during the cell cycle, becoming maximally phosphorylated during late G2 phase and M phase, and being dephosphorylated sharply thereafter. In terms of processing, crotonylation (Kcr) is specifically present in male germ cells and marks testis-specific genes in post-meiotic cells, including X-linked genes that escape sex chromosome inactivation in haploid cells. Crotonylation marks active promoters and enhancers and confers resistance to transcriptional repressors. It is also associated with post-meiotically activated genes on autosomes. Post-translationally, citrullination at Arg-54 (H1R54ci) by PADI4 takes place within the DNA-binding site of H1 and results in its displacement from chromatin and global chromatin decondensation, thereby promoting pluripotency and stem cell maintenance. ADP-ribosylated on Ser-188 in response to DNA damage.

The protein resides in the nucleus. It is found in the chromosome. Histone H1 protein binds to linker DNA between nucleosomes forming the macromolecular structure known as the chromatin fiber. Histones H1 are necessary for the condensation of nucleosome chains into higher-order structured fibers. Also acts as a regulator of individual gene transcription through chromatin remodeling, nucleosome spacing and DNA methylation. The sequence is that of Histone H1.2 from Homo sapiens (Human).